The following is a 437-amino-acid chain: Ribosomal protein uS12 methylthiotransferase RimO (437 aa).

An MTTase N-terminal domain is found at proline 9–cysteine 125. Cysteine 18, cysteine 54, cysteine 88, cysteine 149, cysteine 153, and cysteine 156 together coordinate [4Fe-4S] cluster. In terms of domain architecture, Radical SAM core spans leucine 135–serine 364. Residues arginine 367–serine 434 form the TRAM domain.

This sequence belongs to the methylthiotransferase family. RimO subfamily. Requires [4Fe-4S] cluster as cofactor.

Its subcellular location is the cytoplasm. The enzyme catalyses L-aspartate(89)-[ribosomal protein uS12]-hydrogen + (sulfur carrier)-SH + AH2 + 2 S-adenosyl-L-methionine = 3-methylsulfanyl-L-aspartate(89)-[ribosomal protein uS12]-hydrogen + (sulfur carrier)-H + 5'-deoxyadenosine + L-methionine + A + S-adenosyl-L-homocysteine + 2 H(+). Functionally, catalyzes the methylthiolation of an aspartic acid residue of ribosomal protein uS12. The protein is Ribosomal protein uS12 methylthiotransferase RimO of Chlorobaculum parvum (strain DSM 263 / NCIMB 8327) (Chlorobium vibrioforme subsp. thiosulfatophilum).